Here is a 473-residue protein sequence, read N- to C-terminus: H(+)/Cl(-) exchange transporter ClcA (473 aa).

Topologically, residues 1 to 32 are cytoplasmic; it reads MKTDTSTFLAQQIVRLRRRDQIRRLMQRDKTP. The helical transmembrane segment at 33–69 threads the bilayer; the sequence is LAILFMAAVVGTLTGLVGVAFEKAVSWVQNMRIGALV. Residues 70 to 76 are Periplasmic-facing; that stretch reads QVADHAF. A helical transmembrane segment spans residues 77–100; the sequence is LLWPLAFILSALLAMVGYFLVRKF. The Selectivity filter part_1 motif lies at 106–110; it reads GSGIP. S107 provides a ligand contact to chloride. The segment at residues 109–116 is an intramembrane region (helical); it reads IPEIEGAL. Residues 117-123 are Cytoplasmic-facing; sequence EELRPVR. 2 helical membrane-spanning segments follow: residues 124–141 and 148–166; these read WWRV…TLGA and EGPT…LDVF. The Selectivity filter part_2 signature appears at 146–150; the sequence is GREGP. The Cytoplasmic segment spans residues 167 to 176; that stretch reads RMRSAEARHT. 2 intramembrane regions (helical) span residues 177 to 189 and 193 to 201; these read LLAT…LSAA and PLAGILFII. Over 202 to 214 the chain is Cytoplasmic; sequence EEMRPQFRYNLIS. The helical transmembrane segment at 215–232 threads the bilayer; the sequence is IKAVFTGVIMSSIVFRIF. Residues 233–252 lie on the Periplasmic side of the membrane; sequence NGEAPIIEVGKLSDAPVNTL. The helical transmembrane segment at 253–281 threads the bilayer; sequence WLYLILGIIFGCVGPVFNSLVLRTQDMFQ. The Cytoplasmic segment spans residues 282–287; the sequence is RFHGGE. The chain crosses the membrane as a helical span at residues 288–309; it reads IKKWVLMGGAIGGLCGILGLIE. At 310–329 the chain is on the periplasmic side; it reads PEAAGGGFNLIPIAAAGNFS. Transmembrane regions (helical) follow at residues 330–349 and 355–376; these read VGLL…LCFS and GIFA…MAAA. The short motif at 355–359 is the Selectivity filter part_3 element; the sequence is GIFAP. Chloride is bound by residues I356 and F357. Residues 377 to 386 lie on the Periplasmic side of the membrane; that stretch reads VLFPQYHLEA. The segment at residues 387-401 is an intramembrane region (helical); the sequence is GTFAIAGMGALMAAS. The segment at residues 402-404 is an intramembrane region (note=Loop between two helices); the sequence is VRA. Positions 405 to 416 form an intramembrane region, helical; the sequence is PLTGIVLVLEMT. An intramembrane region (note=Loop between two helices) is located at residues 417 to 421; sequence DNYQL. Residues 422–438 traverse the membrane as a helical segment; it reads ILPMIITCLGATLLAQF. At 439–473 the chain is on the cytoplasmic side; it reads LGGKPLYSTILARTLAKQDAEQAAKNQNAPAGENT. Position 445 (Y445) interacts with chloride.

It belongs to the chloride channel (TC 2.A.49) family. ClcA subfamily. In terms of assembly, homodimer.

It localises to the cell inner membrane. The enzyme catalyses 2 chloride(in) + H(+)(out) = 2 chloride(out) + H(+)(in). In terms of biological role, proton-coupled chloride transporter. Functions as antiport system and exchanges two chloride ions for 1 proton. Probably acts as an electrical shunt for an outwardly-directed proton pump that is linked to amino acid decarboxylation, as part of the extreme acid resistance (XAR) response. In Salmonella agona (strain SL483), this protein is H(+)/Cl(-) exchange transporter ClcA.